We begin with the raw amino-acid sequence, 32 residues long: Conotoxin pr6d (32 aa).

Position 5 is a 4-hydroxyproline (P5). Intrachain disulfides connect C7/C20, C14/C25, and C19/C30.

Expressed by the venom duct.

The protein resides in the secreted. In Conus parius (Cone snail), this protein is Conotoxin pr6d.